The primary structure comprises 223 residues: Neurotrophic factor BDNF precursor form (223 aa).

Positions serine 1–alanine 5 are cleaved as a signal peptide. A propeptide spanning residues alanine 6–arginine 114 is cleaved from the precursor. N-linked (GlcNAc...) asparagine glycosylation is present at asparagine 107. Intrachain disulfides connect cysteine 127/cysteine 194 and cysteine 172/cysteine 223.

The protein belongs to the NGF-beta family.

Its subcellular location is the secreted. Its function is as follows. Promotes the survival of neuronal populations that are all located either in the central nervous system or directly connected to it. The protein is Neurotrophic factor BDNF precursor form (BDNF) of Candoia carinata (Papuan tree boa).